The following is a 469-amino-acid chain: 3-isopropylmalate dehydratase large subunit (469 aa).

3 residues coordinate [4Fe-4S] cluster: Cys-347, Cys-410, and Cys-413.

This sequence belongs to the aconitase/IPM isomerase family. LeuC type 1 subfamily. Heterodimer of LeuC and LeuD. Requires [4Fe-4S] cluster as cofactor.

It carries out the reaction (2R,3S)-3-isopropylmalate = (2S)-2-isopropylmalate. It participates in amino-acid biosynthesis; L-leucine biosynthesis; L-leucine from 3-methyl-2-oxobutanoate: step 2/4. Its function is as follows. Catalyzes the isomerization between 2-isopropylmalate and 3-isopropylmalate, via the formation of 2-isopropylmaleate. This chain is 3-isopropylmalate dehydratase large subunit, found in Polynucleobacter necessarius subsp. necessarius (strain STIR1).